A 441-amino-acid polypeptide reads, in one-letter code: Bacteria-responsive protein 1 (441 aa).

Positions 1–18 (MWFFKVGALLFLAALVSA) are cleaved as a signal peptide. Residue N20 is glycosylated (N-linked (GlcNAc...) asparagine). The GH18 domain maps to 25–441 (PKVLCYYDGQ…PILRAAKYRL (417 aa)). A disulfide bridge links C29 with C56. N225 carries N-linked (GlcNAc...) asparagine glycosylation.

It belongs to the glycosyl hydrolase 18 family. IDGF subfamily. In terms of tissue distribution, salivary gland (at protein level).

The protein localises to the secreted. In terms of biological role, promotes recruitment of host neutrophils at the bite site. Induces expression of IL1B and IL6 in the skin of the host. (Microbial infection) Enhances Zika virus replication and exacerbates disease pathogenesis in the host. The sequence is that of Bacteria-responsive protein 1 from Aedes aegypti (Yellowfever mosquito).